A 183-amino-acid polypeptide reads, in one-letter code: Large ribosomal subunit protein uL18 (183 aa).

It belongs to the universal ribosomal protein uL18 family. Part of the 50S ribosomal subunit. Contacts the 5S and 23S rRNAs.

Its function is as follows. This is one of the proteins that bind and probably mediate the attachment of the 5S RNA into the large ribosomal subunit, where it forms part of the central protuberance. The polypeptide is Large ribosomal subunit protein uL18 (Halobacterium salinarum (strain ATCC 29341 / DSM 671 / R1)).